The following is a 430-amino-acid chain: MGQSVVVLGAQWGDEGKGKIVDLLTEEIGAVVRFQGGHNAGHTLVINGKKTVLHLIPSGILRNGVLCLIGNGVVISPAALRKEIEELEDTGLEIRSRLKISPAAPLIMEYHIALDQAREKAAGGRAIGTTGRGIGPAYEDKVGRRGIRVADLHYPDQLAEKLRDALDYHNFVLTRYFGVDGMDFQRIYDEMLVFAEYVEPMKSDVAGILHDLRKQGKRVLFEGAQGTLLDIDHGTYPYVTSSSTTVGGALSGAGVGVQDIDYVLGIAKAYATRVGGGPFPTELDDEIGQGIRDRGVEYGASTGRPRRCGWMDIVALKRAVAINGITGLCITKLDVLDGMDKLKICIAYEYHDKRSEYAPLDAQGWEECTPVYLEFPGWNESTHGITSWEKLPPAARAYLCALEELAGCPIGIVSTGPDREHTIMLHDPFA.

GTP contacts are provided by residues 13–19 (GDEGKGK) and 41–43 (GHT). D14 serves as the catalytic Proton acceptor. Residues D14 and G41 each coordinate Mg(2+). IMP is bound by residues 14 to 17 (DEGK), 39 to 42 (NAGH), T130, R144, Q225, T240, and R304. H42 serves as the catalytic Proton donor. 300–306 (ASTGRPR) contributes to the substrate binding site. Residues R306, 332 to 334 (KLD), and 414 to 416 (STG) contribute to the GTP site.

The protein belongs to the adenylosuccinate synthetase family. As to quaternary structure, homodimer. Mg(2+) serves as cofactor.

It is found in the cytoplasm. It carries out the reaction IMP + L-aspartate + GTP = N(6)-(1,2-dicarboxyethyl)-AMP + GDP + phosphate + 2 H(+). The protein operates within purine metabolism; AMP biosynthesis via de novo pathway; AMP from IMP: step 1/2. Its function is as follows. Plays an important role in the de novo pathway of purine nucleotide biosynthesis. Catalyzes the first committed step in the biosynthesis of AMP from IMP. The sequence is that of Adenylosuccinate synthetase from Xylella fastidiosa (strain 9a5c).